The sequence spans 105 residues: Small ribosomal subunit protein bS6 (105 aa).

This sequence belongs to the bacterial ribosomal protein bS6 family.

Functionally, binds together with bS18 to 16S ribosomal RNA. This Lawsonia intracellularis (strain PHE/MN1-00) protein is Small ribosomal subunit protein bS6.